The primary structure comprises 1358 residues: DNA-directed RNA polymerase subunit beta (1358 aa).

This sequence belongs to the RNA polymerase beta chain family. The RNAP catalytic core consists of 2 alpha, 1 beta, 1 beta' and 1 omega subunit. When a sigma factor is associated with the core the holoenzyme is formed, which can initiate transcription.

It carries out the reaction RNA(n) + a ribonucleoside 5'-triphosphate = RNA(n+1) + diphosphate. Its function is as follows. DNA-dependent RNA polymerase catalyzes the transcription of DNA into RNA using the four ribonucleoside triphosphates as substrates. The chain is DNA-directed RNA polymerase subunit beta from Francisella tularensis subsp. holarctica (strain OSU18).